Consider the following 103-residue polypeptide: Histone H4 (103 aa).

The segment covering 1-14 has biased composition (gly residues); sequence MSGRGKGGKGLGKG. Residues 1 to 20 form a disordered region; it reads MSGRGKGGKGLGKGGAKRHR. The residue at position 2 (S2) is an N-acetylserine. Residues K6 and K13 each carry the N6-acetyl-N6-methyllysine; alternate modification. At K17 the chain carries N6-acetyllysine. The DNA-binding element occupies 17 to 21; that stretch reads KRHRR.

It belongs to the histone H4 family. As to quaternary structure, the nucleosome is a histone octamer containing two molecules each of H2A, H2B, H3 and H4 assembled in one H3-H4 heterotetramer and two H2A-H2B heterodimers. The octamer wraps approximately 147 bp of DNA.

Its subcellular location is the nucleus. The protein resides in the chromosome. Its function is as follows. Core component of nucleosome. Nucleosomes wrap and compact DNA into chromatin, limiting DNA accessibility to the cellular machineries which require DNA as a template. Histones thereby play a central role in transcription regulation, DNA repair, DNA replication and chromosomal stability. DNA accessibility is regulated via a complex set of post-translational modifications of histones, also called histone code, and nucleosome remodeling. In Mytilus chilensis (Chilean blue mussel), this protein is Histone H4.